The sequence spans 776 residues: Transcription factor MYB3R-1 (776 aa).

Residues 1–41 (MKREMKAPTTPLESLQGDLKGKQGRTSGPARRSTKGQWTPE) form a disordered region. HTH myb-type domains are found at residues 30–81 (ARRS…QKVL), 82–137 (NPEL…NPGI), and 138–188 (NKNA…KKKL). DNA-binding regions (H-T-H motif) lie at residues 58–81 (WKKI…QKVL), 110–133 (WSTI…HNHL), and 161–184 (WAEL…NSSV). 3 disordered regions span residues 217–253 (SSWM…STND), 364–384 (FQSS…TDPE), and 401–435 (DNMK…AETH). Polar residues-rich tracts occupy residues 240–253 (CSQA…STND), 364–380 (FQSS…SNSD), and 423–432 (GKGSLCSQAA). A Nuclear localization signal motif is present at residues 648 to 655 (KKRHRDLL).

In terms of assembly, component of a DREAM-like complex which modulates a variety of developmentally regulated genes and of the mitotic genes in proliferating and differentiated cells. As to expression, expressed ubiquitously at low levels. Expressed in roots, cotyledons, flowers and leaves, especially in vascular tissues.

The protein localises to the nucleus. In terms of biological role, transcription factor that binds 5'-AACGG-3' motifs in gene promoters. Transcription activator involved in the regulation of cytokinesis, probably via the activation of several G2/M phase-specific genes transcription (e.g. KNOLLE). Transcription repressor that regulates organ growth. Binds to the promoters of G2/M-specific genes and to E2F target genes to prevent their expression in post-mitotic cells and to restrict the time window of their expression in proliferating cells. Required for the maintenance of diploidy. This chain is Transcription factor MYB3R-1, found in Arabidopsis thaliana (Mouse-ear cress).